The following is a 1391-amino-acid chain: DNA-directed RNA polymerase subunit beta' (1391 aa).

Residues cysteine 70, cysteine 72, cysteine 85, and cysteine 88 each contribute to the Zn(2+) site. Mg(2+) contacts are provided by aspartate 461, aspartate 463, and aspartate 465. Zn(2+) contacts are provided by cysteine 809, cysteine 882, cysteine 889, and cysteine 892.

It belongs to the RNA polymerase beta' chain family. In terms of assembly, the RNAP catalytic core consists of 2 alpha, 1 beta, 1 beta' and 1 omega subunit. When a sigma factor is associated with the core the holoenzyme is formed, which can initiate transcription. It depends on Mg(2+) as a cofactor. Zn(2+) serves as cofactor.

The enzyme catalyses RNA(n) + a ribonucleoside 5'-triphosphate = RNA(n+1) + diphosphate. In terms of biological role, DNA-dependent RNA polymerase catalyzes the transcription of DNA into RNA using the four ribonucleoside triphosphates as substrates. The sequence is that of DNA-directed RNA polymerase subunit beta' from Zymomonas mobilis subsp. mobilis (strain ATCC 31821 / ZM4 / CP4).